The sequence spans 90 residues: Acylphosphatase (90 aa).

The Acylphosphatase-like domain maps to 5–90 (SFVVRVWGLV…PPKGSGFHTN (86 aa)). Catalysis depends on residues Arg20 and Asn38.

Belongs to the acylphosphatase family.

It carries out the reaction an acyl phosphate + H2O = a carboxylate + phosphate + H(+). This Aeromonas hydrophila subsp. hydrophila (strain ATCC 7966 / DSM 30187 / BCRC 13018 / CCUG 14551 / JCM 1027 / KCTC 2358 / NCIMB 9240 / NCTC 8049) protein is Acylphosphatase (acyP).